Here is a 278-residue protein sequence, read N- to C-terminus: Sulfur carrier protein FdhD (278 aa).

The active-site Cysteine persulfide intermediate is the Cys-121. 260-265 (FCKPGR) contacts Mo-bis(molybdopterin guanine dinucleotide).

Belongs to the FdhD family.

It localises to the cytoplasm. Functionally, required for formate dehydrogenase (FDH) activity. Acts as a sulfur carrier protein that transfers sulfur from IscS to the molybdenum cofactor prior to its insertion into FDH. The protein is Sulfur carrier protein FdhD of Salmonella choleraesuis (strain SC-B67).